The primary structure comprises 396 residues: CCA-adding enzyme (396 aa).

ATP is bound by residues Gly32 and Arg35. The CTP site is built by Gly32 and Arg35. Mg(2+) contacts are provided by Asp45 and Asp47. Arg116, Asp159, Arg162, Arg165, and Arg168 together coordinate ATP. Residues Arg116, Asp159, Arg162, Arg165, and Arg168 each coordinate CTP.

This sequence belongs to the tRNA nucleotidyltransferase/poly(A) polymerase family. Bacterial CCA-adding enzyme type 3 subfamily. Homodimer. Requires Mg(2+) as cofactor.

The catalysed reaction is a tRNA precursor + 2 CTP + ATP = a tRNA with a 3' CCA end + 3 diphosphate. The enzyme catalyses a tRNA with a 3' CCA end + 2 CTP + ATP = a tRNA with a 3' CCACCA end + 3 diphosphate. Its function is as follows. Catalyzes the addition and repair of the essential 3'-terminal CCA sequence in tRNAs without using a nucleic acid template. Adds these three nucleotides in the order of C, C, and A to the tRNA nucleotide-73, using CTP and ATP as substrates and producing inorganic pyrophosphate. tRNA 3'-terminal CCA addition is required both for tRNA processing and repair. Also involved in tRNA surveillance by mediating tandem CCA addition to generate a CCACCA at the 3' terminus of unstable tRNAs. While stable tRNAs receive only 3'-terminal CCA, unstable tRNAs are marked with CCACCA and rapidly degraded. This Lactobacillus delbrueckii subsp. bulgaricus (strain ATCC BAA-365 / Lb-18) protein is CCA-adding enzyme.